Here is a 343-residue protein sequence, read N- to C-terminus: Fructose-1,6-bisphosphatase class 1 (343 aa).

Glu-99, Asp-121, Leu-123, and Asp-124 together coordinate Mg(2+). Substrate-binding positions include 124 to 127 (DGSS), Asn-218, Tyr-250, and Lys-283. Glu-289 is a Mg(2+) binding site.

Belongs to the FBPase class 1 family. As to quaternary structure, homotetramer. Mg(2+) serves as cofactor.

It localises to the cytoplasm. It carries out the reaction beta-D-fructose 1,6-bisphosphate + H2O = beta-D-fructose 6-phosphate + phosphate. The protein operates within carbohydrate biosynthesis; gluconeogenesis. This is Fructose-1,6-bisphosphatase class 1 from Leptospira biflexa serovar Patoc (strain Patoc 1 / Ames).